Reading from the N-terminus, the 401-residue chain is Probable tRNA sulfurtransferase (401 aa).

In terms of domain architecture, THUMP spans 60 to 165 (EPIIDKLKTV…QDGTYVTCHD (106 aa)). ATP is bound by residues 183-184 (ML), 208-209 (HF), Arg265, Gly287, and Gln296.

This sequence belongs to the ThiI family.

The protein resides in the cytoplasm. The catalysed reaction is [ThiI sulfur-carrier protein]-S-sulfanyl-L-cysteine + a uridine in tRNA + 2 reduced [2Fe-2S]-[ferredoxin] + ATP + H(+) = [ThiI sulfur-carrier protein]-L-cysteine + a 4-thiouridine in tRNA + 2 oxidized [2Fe-2S]-[ferredoxin] + AMP + diphosphate. The enzyme catalyses [ThiS sulfur-carrier protein]-C-terminal Gly-Gly-AMP + S-sulfanyl-L-cysteinyl-[cysteine desulfurase] + AH2 = [ThiS sulfur-carrier protein]-C-terminal-Gly-aminoethanethioate + L-cysteinyl-[cysteine desulfurase] + A + AMP + 2 H(+). It functions in the pathway cofactor biosynthesis; thiamine diphosphate biosynthesis. Its function is as follows. Catalyzes the ATP-dependent transfer of a sulfur to tRNA to produce 4-thiouridine in position 8 of tRNAs, which functions as a near-UV photosensor. Also catalyzes the transfer of sulfur to the sulfur carrier protein ThiS, forming ThiS-thiocarboxylate. This is a step in the synthesis of thiazole, in the thiamine biosynthesis pathway. The sulfur is donated as persulfide by IscS. The sequence is that of Probable tRNA sulfurtransferase from Geobacillus thermodenitrificans (strain NG80-2).